A 236-amino-acid polypeptide reads, in one-letter code: Phosphatidylserine decarboxylase proenzyme (236 aa).

Ser-203 (schiff-base intermediate with substrate; via pyruvic acid) is an active-site residue. Ser-203 is subject to Pyruvic acid (Ser); by autocatalysis.

The protein belongs to the phosphatidylserine decarboxylase family. PSD-A subfamily. Heterodimer of a large membrane-associated beta subunit and a small pyruvoyl-containing alpha subunit. Requires pyruvate as cofactor. Post-translationally, is synthesized initially as an inactive proenzyme. Formation of the active enzyme involves a self-maturation process in which the active site pyruvoyl group is generated from an internal serine residue via an autocatalytic post-translational modification. Two non-identical subunits are generated from the proenzyme in this reaction, and the pyruvate is formed at the N-terminus of the alpha chain, which is derived from the carboxyl end of the proenzyme. The post-translation cleavage follows an unusual pathway, termed non-hydrolytic serinolysis, in which the side chain hydroxyl group of the serine supplies its oxygen atom to form the C-terminus of the beta chain, while the remainder of the serine residue undergoes an oxidative deamination to produce ammonia and the pyruvoyl prosthetic group on the alpha chain.

It localises to the cell membrane. It carries out the reaction a 1,2-diacyl-sn-glycero-3-phospho-L-serine + H(+) = a 1,2-diacyl-sn-glycero-3-phosphoethanolamine + CO2. The protein operates within phospholipid metabolism; phosphatidylethanolamine biosynthesis; phosphatidylethanolamine from CDP-diacylglycerol: step 2/2. Its function is as follows. Catalyzes the formation of phosphatidylethanolamine (PtdEtn) from phosphatidylserine (PtdSer). This Saccharopolyspora erythraea (strain ATCC 11635 / DSM 40517 / JCM 4748 / NBRC 13426 / NCIMB 8594 / NRRL 2338) protein is Phosphatidylserine decarboxylase proenzyme.